A 413-amino-acid chain; its full sequence is 26S proteasome regulatory subunit 6B homolog (413 aa).

The segment at 1 to 30 (MATAMVLDPKPAEKLPATRPETSITDVPSD) is disordered. The stretch at 32 to 80 (EDDLYARLKSLQRQLEFIEIQEEYVKDELKNLRREHLRAQEEVKRIQSV) forms a coiled coil. ATP is bound at residue 201–208 (GPPGTGKT).

Belongs to the AAA ATPase family.

It is found in the cytoplasm. Its subcellular location is the nucleus. The 26S proteasome is involved in the ATP-dependent degradation of ubiquitinated proteins. The regulatory (or ATPase) complex confers ATP dependency and substrate specificity to the 26S complex. This chain is 26S proteasome regulatory subunit 6B homolog, found in Solanum tuberosum (Potato).